The primary structure comprises 320 residues: Adhesin MafA 1 (320 aa).

The signal sequence occupies residues 1–18; the sequence is MQARLLIPILFSVFILSA. C19 carries N-palmitoyl cysteine lipidation. C19 is lipidated: S-diacylglycerol cysteine. The disordered stretch occupies residues 288–320; it reads HMGNSAPSVEADNSHEGYGYSDEAVRRHRQGQP.

This sequence belongs to the MafA family.

It is found in the cell outer membrane. The chain is Adhesin MafA 1 (mafA1) from Neisseria meningitidis serogroup A / serotype 4A (strain DSM 15465 / Z2491).